We begin with the raw amino-acid sequence, 244 residues long: tRNA (guanine-N(1)-)-methyltransferase (244 aa).

S-adenosyl-L-methionine contacts are provided by residues Gly-112 and 132–137 (IGDYIL).

Belongs to the RNA methyltransferase TrmD family. In terms of assembly, homodimer.

It is found in the cytoplasm. It catalyses the reaction guanosine(37) in tRNA + S-adenosyl-L-methionine = N(1)-methylguanosine(37) in tRNA + S-adenosyl-L-homocysteine + H(+). Specifically methylates guanosine-37 in various tRNAs. In Geobacillus kaustophilus (strain HTA426), this protein is tRNA (guanine-N(1)-)-methyltransferase.